A 448-amino-acid chain; its full sequence is Tubulin beta chain (448 aa).

GTP contacts are provided by glutamine 11, glutamate 69, serine 138, glycine 142, threonine 143, glycine 144, asparagine 204, and asparagine 226. A Mg(2+)-binding site is contributed by glutamate 69. A disordered region spans residues 425–448 (YQDAGVDEEEEEYDEEAPVEEPLE). Residues 429–448 (GVDEEEEEYDEEAPVEEPLE) show a composition bias toward acidic residues.

The protein belongs to the tubulin family. As to quaternary structure, dimer of alpha and beta chains. A typical microtubule is a hollow water-filled tube with an outer diameter of 25 nm and an inner diameter of 15 nM. Alpha-beta heterodimers associate head-to-tail to form protofilaments running lengthwise along the microtubule wall with the beta-tubulin subunit facing the microtubule plus end conferring a structural polarity. Microtubules usually have 13 protofilaments but different protofilament numbers can be found in some organisms and specialized cells. It depends on Mg(2+) as a cofactor.

The protein localises to the cytoplasm. It localises to the cytoskeleton. Tubulin is the major constituent of microtubules, a cylinder consisting of laterally associated linear protofilaments composed of alpha- and beta-tubulin heterodimers. Microtubules grow by the addition of GTP-tubulin dimers to the microtubule end, where a stabilizing cap forms. Below the cap, tubulin dimers are in GDP-bound state, owing to GTPase activity of alpha-tubulin. The chain is Tubulin beta chain from Metarhizium anisopliae (Entomophthora anisopliae).